The sequence spans 121 residues: UPF0102 protein DehaBAV1_0707 (121 aa).

The protein belongs to the UPF0102 family.

The sequence is that of UPF0102 protein DehaBAV1_0707 from Dehalococcoides mccartyi (strain ATCC BAA-2100 / JCM 16839 / KCTC 5957 / BAV1).